Here is a 239-residue protein sequence, read N- to C-terminus: Putative zinc finger protein 132L (239 aa).

The segment at 20–40 (DASLSTKSPKREPSQEKEIKK) is disordered. Over residues 28–40 (PKREPSQEKEIKK) the composition is skewed to basic and acidic residues. 2 consecutive C3H1-type zinc fingers follow at residues 44 to 68 (IKKN…HPGE) and 81 to 106 (RRKT…HDES). Residues 128 to 151 (PGECKFSHPPPPPPSPPSPPPKEE) form a disordered region. The segment covering 135–147 (HPPPPPPSPPSPP) has biased composition (pro residues).

The protein is Putative zinc finger protein 132L of Acheta domesticus (House cricket).